The sequence spans 411 residues: Adherens junction-associated protein 1 (411 aa).

An N-terminal signal peptide occupies residues 1–43 (MWIQQLLGLSSMPIRWPGRSLGSHLWILIAMLQLAVDFPSCDS). Residues 44–283 (LGPGPEFRLL…GETSGLAVHQ (240 aa)) lie on the Extracellular side of the membrane. Low complexity-rich tracts occupy residues 62–76 (LWSL…LPTP), 121–145 (PPAA…AGAA), and 247–264 (TPVG…SNNG). Disordered regions lie at residues 62–156 (LWSL…RGRR) and 242–270 (DPWK…IQPP). A helical transmembrane segment spans residues 284–304 (IITITVSLIMVIAALITTLVL). The segment at 304-411 (LKNCCAPSGH…VSEKWFEISC (108 aa)) is targeting signals. At 305-411 (KNCCAPSGHT…VSEKWFEISC (107 aa)) the chain is on the cytoplasmic side.

In terms of assembly, forms a complex with CDH1 and CTNNB1; interacts directly with CTNNB1. Interacts with AP1M2 and with isoform 2 of BSG/CD147.

Its subcellular location is the basolateral cell membrane. It is found in the apical cell membrane. The protein localises to the cell junction. It localises to the adherens junction. Functionally, plays a role in cell adhesion and cell migration. This is Adherens junction-associated protein 1 (Ajap1) from Rattus norvegicus (Rat).